The sequence spans 318 residues: Ribonuclease Z (318 aa).

His-63, His-65, Asp-67, His-68, His-142, Asp-213, and His-273 together coordinate Zn(2+). Asp-67 acts as the Proton acceptor in catalysis.

It belongs to the RNase Z family. In terms of assembly, homodimer. Zn(2+) serves as cofactor.

The enzyme catalyses Endonucleolytic cleavage of RNA, removing extra 3' nucleotides from tRNA precursor, generating 3' termini of tRNAs. A 3'-hydroxy group is left at the tRNA terminus and a 5'-phosphoryl group is left at the trailer molecule.. In terms of biological role, zinc phosphodiesterase, which displays some tRNA 3'-processing endonuclease activity. Probably involved in tRNA maturation, by removing a 3'-trailer from precursor tRNA. The protein is Ribonuclease Z of Leuconostoc mesenteroides subsp. mesenteroides (strain ATCC 8293 / DSM 20343 / BCRC 11652 / CCM 1803 / JCM 6124 / NCDO 523 / NBRC 100496 / NCIMB 8023 / NCTC 12954 / NRRL B-1118 / 37Y).